The primary structure comprises 165 residues: V-type proton ATPase subunit c2 (165 aa).

Over 1–12 the chain is Lumenal; that stretch reads MASTFSGDETAP. Residues 13-33 form a helical membrane-spanning segment; it reads FFGFLGAAAALVFSCMGAAYG. Residues 34 to 55 lie on the Cytoplasmic side of the membrane; that stretch reads TAKSGVGVASMGVMRPELVMKS. The chain crosses the membrane as a helical span at residues 56-76; the sequence is IVPVVMAGVLGIYGLIIAVII. Residues 77 to 95 lie on the Lumenal side of the membrane; it reads STGINPKAKSYYLFDGYAH. A helical membrane pass occupies residues 96–117; it reads LSSGLACGLAGLSAGMAIGIVG. Topologically, residues 118–129 are cytoplasmic; it reads DAGVRANAQQPK. A helical transmembrane segment spans residues 130 to 155; it reads LFVGMILILIFAEALALYGLIVGIIL. Over 156–165 the chain is Lumenal; that stretch reads SSRAGQSRAE.

It belongs to the V-ATPase proteolipid subunit family. In terms of assembly, V-ATPase is a heteromultimeric enzyme composed of a peripheral catalytic V1 complex (components A to H) attached to an integral membrane V0 proton pore complex (components: a, c, c'', d and e). The proteolipid components c and c'' are present as a hexameric ring that forms the proton-conducting pore. Expressed in leaf, root, flower and silique, with lower expression in roots.

It is found in the vacuole membrane. Functionally, proton-conducting pore forming subunit of the membrane integral V0 complex of vacuolar ATPase. V-ATPase is responsible for acidifying a variety of intracellular compartments in eukaryotic cells. This chain is V-type proton ATPase subunit c2 (VHA-c2), found in Arabidopsis thaliana (Mouse-ear cress).